The sequence spans 265 residues: Tryptophan synthase alpha chain (265 aa).

Residues Glu-49 and Asp-60 each act as proton acceptor in the active site.

Belongs to the TrpA family. In terms of assembly, tetramer of two alpha and two beta chains.

It carries out the reaction (1S,2R)-1-C-(indol-3-yl)glycerol 3-phosphate + L-serine = D-glyceraldehyde 3-phosphate + L-tryptophan + H2O. It functions in the pathway amino-acid biosynthesis; L-tryptophan biosynthesis; L-tryptophan from chorismate: step 5/5. Its function is as follows. The alpha subunit is responsible for the aldol cleavage of indoleglycerol phosphate to indole and glyceraldehyde 3-phosphate. The chain is Tryptophan synthase alpha chain from Desulfatibacillum aliphaticivorans.